A 115-amino-acid chain; its full sequence is U3-lycotoxin-Ls1a (115 aa).

The signal sequence occupies residues 1–20 (MKFVLLFGVLLVTLFSYSSA). Residues 21–44 (EMLDDFDQADEEELLSLIEKEEAR) constitute a propeptide that is removed on maturation. 4 disulfide bridges follow: Cys-48-Cys-63, Cys-55-Cys-72, Cys-62-Cys-87, and Cys-74-Cys-85.

Belongs to the neurotoxin 19 (CSTX) family. 01 subfamily. As to expression, expressed by the venom gland.

The protein resides in the secreted. This is U3-lycotoxin-Ls1a from Lycosa singoriensis (Wolf spider).